A 505-amino-acid chain; its full sequence is Aminoaldehyde dehydrogenase 2 (505 aa).

Residues Ile31 and Asp99 each contribute to the Na(+) site. NAD(+)-binding positions include 159–161 (TPW) and 185–188 (KPSE). A Na(+)-binding site is contributed by Leu189. Position 238 to 242 (238 to 242 (GSGPT)) interacts with NAD(+). Catalysis depends on Glu260, which acts as the Proton acceptor. Leu261 serves as a coordination point for NAD(+). Cys295 (nucleophile) is an active-site residue. The NAD(+) site is built by Glu394 and Trp460.

It belongs to the aldehyde dehydrogenase family. As to quaternary structure, forms homodimers.

It carries out the reaction 4-aminobutanal + NAD(+) + H2O = 4-aminobutanoate + NADH + 2 H(+). It catalyses the reaction 3-aminopropanal + NAD(+) + H2O = beta-alanine + NADH + 2 H(+). The catalysed reaction is 4-(trimethylamino)butanal + NAD(+) + H2O = 4-(trimethylamino)butanoate + NADH + 2 H(+). The enzyme catalyses 4-guanidinobutanal + NAD(+) + H2O = 4-guanidinobutanoate + NADH + 2 H(+). Its pathway is amine and polyamine biosynthesis; betaine biosynthesis via choline pathway; betaine from betaine aldehyde: step 1/1. Dehydrogenase that catalyzes the oxidation of several aminoaldehydes. Metabolizes and detoxifies aldehyde products of polyamine degradation to non-toxic amino acids. Catalyzes the oxidation of 4-aminobutanal and 3-aminopropanal to 4-aminobutanoate and beta-alanine, respectively. Catalyzes the oxidation of 4-(trimethylamino)butanal and 4-guanidinobutanal to 4-trimethylammoniobutanoate and 4-guanidinobutanoate, respectively. This chain is Aminoaldehyde dehydrogenase 2, found in Solanum lycopersicum (Tomato).